Reading from the N-terminus, the 399-residue chain is S-adenosylmethionine synthase (399 aa).

H16 contributes to the ATP binding site. Mg(2+) is bound at residue D18. K(+) is bound at residue E44. Residues E57 and Q100 each contribute to the L-methionine site. Residues 100 to 110 (QSSDIAQGVNE) form a flexible loop region. ATP contacts are provided by residues 177-179 (DAK), 244-245 (RF), D253, 259-260 (RK), A276, and K280. L-methionine is bound at residue D253. Residue K284 participates in L-methionine binding.

This sequence belongs to the AdoMet synthase family. As to quaternary structure, homotetramer; dimer of dimers. It depends on Mg(2+) as a cofactor. Requires K(+) as cofactor.

It is found in the cytoplasm. The enzyme catalyses L-methionine + ATP + H2O = S-adenosyl-L-methionine + phosphate + diphosphate. The protein operates within amino-acid biosynthesis; S-adenosyl-L-methionine biosynthesis; S-adenosyl-L-methionine from L-methionine: step 1/1. Its function is as follows. Catalyzes the formation of S-adenosylmethionine (AdoMet) from methionine and ATP. The overall synthetic reaction is composed of two sequential steps, AdoMet formation and the subsequent tripolyphosphate hydrolysis which occurs prior to release of AdoMet from the enzyme. This is S-adenosylmethionine synthase from Lactococcus lactis subsp. cremoris (strain MG1363).